Consider the following 470-residue polypeptide: Cannabinoid receptor 1 (470 aa).

Residues Met-1–Ala-121 lie on the Extracellular side of the membrane. The tract at residues Lys-2–Leu-23 is required for mitochondrial localization. Asn-78 and Asn-84 each carry an N-linked (GlcNAc...) asparagine glycan. Residues Leu-122–Val-142 traverse the membrane as a helical segment. The Cytoplasmic segment spans residues Gln-143–His-154. Residues Phe-155 to Val-175 form a helical membrane-spanning segment. At Asp-176–Asn-187 the chain is on the extracellular side. The chain crosses the membrane as a helical span at residues Val-188 to Phe-208. At Leu-209 to Lys-232 the chain is on the cytoplasmic side. The chain crosses the membrane as a helical span at residues Ala-233 to Phe-253. The Extracellular portion of the chain corresponds to Gly-254 to Met-277. The chain crosses the membrane as a helical span at residues Phe-278–Leu-298. The Cytoplasmic segment spans residues Trp-299–Thr-344. Residues Leu-345–Tyr-365 form a helical membrane-spanning segment. At Asp-366–Thr-377 the chain is on the extracellular side. An N-linked (GlcNAc...) asparagine glycan is attached at Asn-372. A helical membrane pass occupies residues Val-378 to Ala-398. Residues Leu-399 to Val-470 lie on the Cytoplasmic side of the membrane. Residue Cys-415 is the site of S-palmitoyl cysteine attachment.

Belongs to the G-protein coupled receptor 1 family. Palmitoylation at Cys-415 is important for recruitment at both plasma membrane and lipid rafts and association with G protein alpha subunits. Expressed in neurons, especially in the olfactory bulbs, telencephalic pallium, and hypothalamus and also in the midbrain and hindbrain (in the mesencephalic tegmentum and dorsolateral rhombencephalon). Expressed also in the spinal cord.

Its subcellular location is the cell membrane. The protein localises to the mitochondrion outer membrane. It is found in the cell projection. It localises to the axon. The protein resides in the presynapse. In terms of biological role, G-protein coupled receptor for cannabinoids. Mediates many cannabinoid-induced effects in the central nervous system (CNS), as well as in peripheral tissues. Regulates cellular respiration and energy production in response to cannabinoids. Signaling typically involves reduction in cyclic AMP. The polypeptide is Cannabinoid receptor 1 (cnr1) (Xenopus laevis (African clawed frog)).